The chain runs to 282 residues: 4-deoxy-L-threo-5-hexosulose-uronate ketol-isomerase 2 (282 aa).

The Zn(2+) site is built by His200, His202, Glu207, and His249.

This sequence belongs to the KduI family. Requires Zn(2+) as cofactor.

The enzyme catalyses 5-dehydro-4-deoxy-D-glucuronate = 3-deoxy-D-glycero-2,5-hexodiulosonate. The protein operates within glycan metabolism; pectin degradation; 2-dehydro-3-deoxy-D-gluconate from pectin: step 4/5. Catalyzes the isomerization of 5-dehydro-4-deoxy-D-glucuronate to 3-deoxy-D-glycero-2,5-hexodiulosonate. This chain is 4-deoxy-L-threo-5-hexosulose-uronate ketol-isomerase 2 (kduI2), found in Rhizobium meliloti (strain 1021) (Ensifer meliloti).